A 449-amino-acid chain; its full sequence is Adenosylhomocysteinase (449 aa).

Ser-2 is subject to N-acetylserine. A Glycyl lysine isopeptide (Lys-Gly) (interchain with G-Cter in ubiquitin) cross-link involves residue Lys-21. Positions 58, 134, and 159 each coordinate substrate. An NAD(+)-binding site is contributed by 160–162 (TTT). Substrate contacts are provided by Lys-189 and Asp-193. Residues Asn-194, 223–228 (GYGDVG), Glu-246, 302–304 (IGH), and Asn-349 contribute to the NAD(+) site. Thr-393 carries the post-translational modification Phosphothreonine. Lys-413 participates in a covalent cross-link: Glycyl lysine isopeptide (Lys-Gly) (interchain with G-Cter in ubiquitin).

Belongs to the adenosylhomocysteinase family. NAD(+) is required as a cofactor.

The catalysed reaction is S-adenosyl-L-homocysteine + H2O = L-homocysteine + adenosine. The protein operates within amino-acid biosynthesis; L-homocysteine biosynthesis; L-homocysteine from S-adenosyl-L-homocysteine: step 1/1. Adenosylhomocysteine is a competitive inhibitor of S-adenosyl-L-methionine-dependent methyl transferase reactions; therefore adenosylhomocysteinase may play a key role in the control of methylations via regulation of the intracellular concentration of adenosylhomocysteine. This is Adenosylhomocysteinase (SAH1) from Saccharomyces cerevisiae (strain ATCC 204508 / S288c) (Baker's yeast).